Here is a 392-residue protein sequence, read N- to C-terminus: Nuclear speckle splicing regulatory protein 1 homolog (392 aa).

Disordered stretches follow at residues 1–73 (MASK…IFDY), 113–169 (RQLE…AFND), and 187–357 (LLND…ARLD). 5 stretches are compositionally biased toward basic and acidic residues: residues 54–65 (KAAEREHQKAEA), 113–132 (RQLE…REKE), 149–160 (KQQEEVKKHREQ), 205–238 (QKNV…KSIY), and 313–357 (KSIE…ARLD). The stretch at 76–132 (NYDEIQAIKNEKKEEARKADKNRESKYAENIIKAHARRQLEQFSREERQQLREREKE) forms a coiled coil.

It belongs to the NSRP1 family. As to expression, expressed in the intestine, nervous system and head neurons in both larvae and adults. Expressed in the distal tip cell.

Its subcellular location is the cytoplasm. The protein localises to the nucleus. Functionally, required for the cessation of distal tip cell migration at the end of larval morphogenesis. This chain is Nuclear speckle splicing regulatory protein 1 homolog (ccdc-55), found in Caenorhabditis elegans.